The sequence spans 787 residues: (-)-kolavenyl diphosphate synthase, chloroplastic (787 aa).

A chloroplast-targeting transit peptide spans 1 to 47; the sequence is MSFATSLPRPTTTGAAGFGLPLATCISLSVSHSFSPKFGICNNTSLR. Lys237 provides a ligand contact to substrate. Mg(2+)-binding residues include Asp368 and Asp370. Residues 368 to 371 carry the DXDD motif motif; sequence DSDD. Residue Lys454 participates in substrate binding.

It belongs to the terpene synthase family. Tpsc subfamily. Mg(2+) is required as a cofactor. In terms of tissue distribution, expressed in peltate glandular trichomes of leaves. Highly expressed in the first leaf pair.

It localises to the plastid. The protein resides in the chloroplast. The enzyme catalyses (2E,6E,10E)-geranylgeranyl diphosphate = (-)-kolavenyl diphosphate. Its activity is regulated as follows. Inhibited by high concentrations of magnesium. Its function is as follows. Involved in the biosynthesis of clerodane diterpenoids natural products, including salvinorin A with potent agonistic activity on brain kappa-opioid receptors, thus conferring hallucinogenic properties. Diterpene synthase that catalyzes the formation of (-)-kolavenyl diphosphate from geranylgeranyl diphosphate (GGPP) as the first reaction in salvinorin A biosynthesis. This chain is (-)-kolavenyl diphosphate synthase, chloroplastic, found in Salvia divinorum (Maria pastora).